The following is a 285-amino-acid chain: Bifunctional protein FolD (285 aa).

NADP(+) is bound by residues 166–168 and I232; that span reads GAS.

It belongs to the tetrahydrofolate dehydrogenase/cyclohydrolase family. In terms of assembly, homodimer.

It catalyses the reaction (6R)-5,10-methylene-5,6,7,8-tetrahydrofolate + NADP(+) = (6R)-5,10-methenyltetrahydrofolate + NADPH. It carries out the reaction (6R)-5,10-methenyltetrahydrofolate + H2O = (6R)-10-formyltetrahydrofolate + H(+). Its pathway is one-carbon metabolism; tetrahydrofolate interconversion. Functionally, catalyzes the oxidation of 5,10-methylenetetrahydrofolate to 5,10-methenyltetrahydrofolate and then the hydrolysis of 5,10-methenyltetrahydrofolate to 10-formyltetrahydrofolate. In Buchnera aphidicola subsp. Schizaphis graminum (strain Sg), this protein is Bifunctional protein FolD.